Reading from the N-terminus, the 471-residue chain is Siroheme synthase (471 aa).

The segment at 1-203 (MEYLPLFADL…GRLEQAEQAL (203 aa)) is precorrin-2 dehydrogenase /sirohydrochlorin ferrochelatase. Residues 22–23 (EV) and 43–44 (RA) contribute to the NAD(+) site. The residue at position 128 (Ser128) is a Phosphoserine. The segment at 215 to 471 (GEVALVGAGP…QKRASVVNLA (257 aa)) is uroporphyrinogen-III C-methyltransferase. S-adenosyl-L-methionine is bound at residue Pro224. The active-site Proton acceptor is Asp247. Catalysis depends on Lys269, which acts as the Proton donor. S-adenosyl-L-methionine contacts are provided by residues 300–302 (GGD), Ile305, 330–331 (TA), Met382, and Gly411.

The protein in the N-terminal section; belongs to the precorrin-2 dehydrogenase / sirohydrochlorin ferrochelatase family. This sequence in the C-terminal section; belongs to the precorrin methyltransferase family.

The catalysed reaction is uroporphyrinogen III + 2 S-adenosyl-L-methionine = precorrin-2 + 2 S-adenosyl-L-homocysteine + H(+). It carries out the reaction precorrin-2 + NAD(+) = sirohydrochlorin + NADH + 2 H(+). It catalyses the reaction siroheme + 2 H(+) = sirohydrochlorin + Fe(2+). The protein operates within cofactor biosynthesis; adenosylcobalamin biosynthesis; precorrin-2 from uroporphyrinogen III: step 1/1. It participates in cofactor biosynthesis; adenosylcobalamin biosynthesis; sirohydrochlorin from precorrin-2: step 1/1. It functions in the pathway porphyrin-containing compound metabolism; siroheme biosynthesis; precorrin-2 from uroporphyrinogen III: step 1/1. Its pathway is porphyrin-containing compound metabolism; siroheme biosynthesis; siroheme from sirohydrochlorin: step 1/1. The protein operates within porphyrin-containing compound metabolism; siroheme biosynthesis; sirohydrochlorin from precorrin-2: step 1/1. Multifunctional enzyme that catalyzes the SAM-dependent methylations of uroporphyrinogen III at position C-2 and C-7 to form precorrin-2 via precorrin-1. Then it catalyzes the NAD-dependent ring dehydrogenation of precorrin-2 to yield sirohydrochlorin. Finally, it catalyzes the ferrochelation of sirohydrochlorin to yield siroheme. The polypeptide is Siroheme synthase (Sodalis glossinidius (strain morsitans)).